We begin with the raw amino-acid sequence, 436 residues long: GTPase Obg (436 aa).

Positions 2–160 (SMFLDTAKIQ…RELLLELKVL (159 aa)) constitute an Obg domain. One can recognise an OBG-type G domain in the interval 161-338 (ADVGLVGFPS…LLDATAELLD (178 aa)). Residues 167-174 (GFPSVGKS), 192-196 (FTTIV), 214-217 (DLPG), 284-287 (NKMD), and 319-321 (SSL) contribute to the GTP site. Mg(2+) contacts are provided by S174 and T194. Residues 358 to 436 (GFDEEAPAFE…IGKFEFEFVD (79 aa)) form the OCT domain.

This sequence belongs to the TRAFAC class OBG-HflX-like GTPase superfamily. OBG GTPase family. In terms of assembly, monomer. Requires Mg(2+) as cofactor.

The protein localises to the cytoplasm. In terms of biological role, an essential GTPase which binds GTP, GDP and possibly (p)ppGpp with moderate affinity, with high nucleotide exchange rates and a fairly low GTP hydrolysis rate. Plays a role in control of the cell cycle, stress response, ribosome biogenesis and in those bacteria that undergo differentiation, in morphogenesis control. The chain is GTPase Obg from Streptococcus gordonii (strain Challis / ATCC 35105 / BCRC 15272 / CH1 / DL1 / V288).